Here is a 386-residue protein sequence, read N- to C-terminus: Delta(7)-sterol 5(6)-desaturase ERG3 (386 aa).

Transmembrane regions (helical) follow at residues 120–140 (LSLFIITTIFGWLLYFIVAYL), 172–192 (IPVMVLLTIPFFLLELNGYSF), and 206–226 (AILWQIPKFILFTDCGIYFLH). The Fatty acid hydroxylase domain maps to 214–337 (FILFTDCGIY…FTTLWDRLGN (124 aa)). A Histidine box-1 motif is present at residues 226 to 230 (HRWLH). A Histidine box-2 motif is present at residues 239–243 (HKPHH). Residues 272–292 (PLLFPLHKVLYLFLFTFVNFW) traverse the membrane as a helical segment. The Histidine box-3 motif lies at 314–318 (HTVHH).

This sequence belongs to the sterol desaturase family. Fe cation serves as cofactor.

The protein resides in the endoplasmic reticulum membrane. The catalysed reaction is a Delta(7)-sterol + 2 Fe(II)-[cytochrome b5] + O2 + 2 H(+) = a Delta(5),Delta(7)-sterol + 2 Fe(III)-[cytochrome b5] + 2 H2O. It functions in the pathway steroid metabolism; ergosterol biosynthesis; ergosterol from zymosterol: step 3/5. Its function is as follows. C-5 sterol desaturase; part of the third module of ergosterol biosynthesis pathway that includes the late steps of the pathwa. ERG3 catalyzes the introduction of a C-5 double bond in the B ring to produce 5-dehydroepisterol. The third module or late pathway involves the ergosterol synthesis itself through consecutive reactions that mainly occur in the endoplasmic reticulum (ER) membrane. Firstly, the squalene synthase ERG9 catalyzes the condensation of 2 farnesyl pyrophosphate moieties to form squalene, which is the precursor of all steroids. Squalene synthase is crucial for balancing the incorporation of farnesyl diphosphate (FPP) into sterol and nonsterol isoprene synthesis. Secondly, the squalene epoxidase ERG1 catalyzes the stereospecific oxidation of squalene to (S)-2,3-epoxysqualene, which is considered to be a rate-limiting enzyme in steroid biosynthesis. Then, the lanosterol synthase ERG7 catalyzes the cyclization of (S)-2,3 oxidosqualene to lanosterol, a reaction that forms the sterol core. In the next steps, lanosterol is transformed to zymosterol through a complex process involving various demethylation, reduction and desaturation reactions. The lanosterol 14-alpha-demethylase ERG11 (also known as CYP51) catalyzes C14-demethylation of lanosterol to produce 4,4'-dimethyl cholesta-8,14,24-triene-3-beta-ol, which is critical for ergosterol biosynthesis. The C-14 reductase ERG24 reduces the C14=C15 double bond of 4,4-dimethyl-cholesta-8,14,24-trienol to produce 4,4-dimethyl-cholesta-8,24-dienol. 4,4-dimethyl-cholesta-8,24-dienol is substrate of the C-4 demethylation complex ERG25-ERG26-ERG27 in which ERG25 catalyzes the three-step monooxygenation required for the demethylation of 4,4-dimethyl and 4alpha-methylsterols, ERG26 catalyzes the oxidative decarboxylation that results in a reduction of the 3-beta-hydroxy group at the C-3 carbon to an oxo group, and ERG27 is responsible for the reduction of the keto group on the C-3. ERG28 has a role as a scaffold to help anchor ERG25, ERG26 and ERG27 to the endoplasmic reticulum and ERG29 regulates the activity of the iron-containing C4-methylsterol oxidase ERG25. Then, the sterol 24-C-methyltransferase ERG6 catalyzes the methyl transfer from S-adenosyl-methionine to the C-24 of zymosterol to form fecosterol. The C-8 sterol isomerase ERG2 catalyzes the reaction which results in unsaturation at C-7 in the B ring of sterols and thus converts fecosterol to episterol. The sterol-C5-desaturase ERG3 then catalyzes the introduction of a C-5 double bond in the B ring to produce 5-dehydroepisterol. The C-22 sterol desaturase ERG5 further converts 5-dehydroepisterol into ergosta-5,7,22,24(28)-tetraen-3beta-ol by forming the C-22(23) double bond in the sterol side chain. Finally, ergosta-5,7,22,24(28)-tetraen-3beta-ol is substrate of the C-24(28) sterol reductase ERG4 to produce ergosterol. This Candida albicans (strain SC5314 / ATCC MYA-2876) (Yeast) protein is Delta(7)-sterol 5(6)-desaturase ERG3.